The primary structure comprises 201 residues: Peptidyl-tRNA hydrolase (201 aa).

Tyr-14 is a tRNA binding site. The Proton acceptor role is filled by His-19. 3 residues coordinate tRNA: Phe-64, Asn-66, and Asn-112.

This sequence belongs to the PTH family. As to quaternary structure, monomer.

It localises to the cytoplasm. It catalyses the reaction an N-acyl-L-alpha-aminoacyl-tRNA + H2O = an N-acyl-L-amino acid + a tRNA + H(+). Functionally, hydrolyzes ribosome-free peptidyl-tRNAs (with 1 or more amino acids incorporated), which drop off the ribosome during protein synthesis, or as a result of ribosome stalling. Catalyzes the release of premature peptidyl moieties from peptidyl-tRNA molecules trapped in stalled 50S ribosomal subunits, and thus maintains levels of free tRNAs and 50S ribosomes. This is Peptidyl-tRNA hydrolase from Rhodopseudomonas palustris (strain BisA53).